The chain runs to 1657 residues: A disintegrin and metalloproteinase with thrombospondin motifs 7 (1657 aa).

The first 20 residues, 1–20, serve as a signal peptide directing secretion; sequence MHRGPSLLLILCALASRVLG. Residues 21-220 constitute a propeptide that is removed on maturation; the sequence is PASGLVTEGR…QQQQKRRQQR (200 aa). The N-linked (GlcNAc...) asparagine glycan is linked to asparagine 84. The disordered stretch occupies residues 165–221; that stretch reads PGHAQPHVVYKHQGSRKQAQQGDSRPSGTCGMQVPPDLEQQREHWEQQQQKRRQQRS. Over residues 180–191 the composition is skewed to polar residues; the sequence is RKQAQQGDSRPS. The Cysteine switch motif lies at 192-199; it reads GTCGMQVP. Cysteine 194 is a binding site for Zn(2+). One can recognise a Peptidase M12B domain in the interval 226 to 437; sequence KWVETLVVAD…GWGLCLDDRP (212 aa). 11 cysteine pairs are disulfide-bonded: cysteine 302–cysteine 356, cysteine 331–cysteine 338, cysteine 350–cysteine 432, cysteine 389–cysteine 416, cysteine 459–cysteine 482, cysteine 470–cysteine 488, cysteine 477–cysteine 507, cysteine 501–cysteine 512, cysteine 535–cysteine 572, cysteine 539–cysteine 577, and cysteine 550–cysteine 562. Histidine 372 is a binding site for Zn(2+). Glutamate 373 is a catalytic residue. Histidine 376 and histidine 382 together coordinate Zn(2+). Residues 447–522 enclose the Disintegrin domain; the sequence is VLPGVLYDVN…VPEGFQPEAV (76 aa). Residues 523 to 578 enclose the TSP type-1 1 domain; it reads DGGWSGWSAWSDCSRSCGVGVRSSERQCTQPVPKNRGKYCVGERKRSQLCNLPACP. N-linked (GlcNAc...) asparagine glycosylation is present at asparagine 622. The segment at 683–794 is spacer; it reads QTVSRTFKET…PGVHYQYTIQ (112 aa). TSP type-1 domains are found at residues 804–863, 864–923, and 925–978; these read PEFS…EPCP, PRWW…NRHV, and CPST…QPCQ. 5 disordered regions span residues 1009 to 1034, 1073 to 1127, 1140 to 1237, 1283 to 1304, and 1317 to 1384; these read LAPR…EELD, GGWT…GLEQ, EDTP…DVVE, GRDS…SSQH, and TVPT…ARNA. Over residues 1211–1224 the composition is skewed to pro residues; sequence PQSPIPTQPSPPSI. 2 stretches are compositionally biased toward polar residues: residues 1293–1304 and 1327–1342; these read PTFSSPELSSQH and PSGQ…TQSP. TSP type-1 domains are found at residues 1366 to 1414, 1417 to 1477, 1479 to 1522, and 1524 to 1584; these read QPSL…SGND, CTLA…CQPG, TKPP…PEPG, and CEES…LCSH. A PLAC domain is found at 1587 to 1627; sequence WPESSRPCATEDCELVEPPRCERDRLSFNFCETLRLLGRCQ.

In terms of assembly, interacts with COMP. Zn(2+) is required as a cofactor. In terms of processing, N-glycosylated. Can be O-fucosylated by POFUT2 on a serine or a threonine residue found within the consensus sequence C1-X(2)-(S/T)-C2-G of the TSP type-1 repeat domains where C1 and C2 are the first and second cysteine residue of the repeat, respectively. Fucosylated repeats can then be further glycosylated by the addition of a beta-1,3-glucose residue by the glucosyltransferase, B3GALTL. Fucosylation mediates the efficient secretion of ADAMTS family members. Can also be C-glycosylated with one or two mannose molecules on tryptophan residues within the consensus sequence W-X-X-W of the TPRs. N- and C-glycosylations can also facilitate secretion. O-glycosylated proteoglycan; contains chondroitin sulfate. Post-translationally, may be cleaved by a furin endopeptidase. The precursor is sequentially processed.

The protein localises to the secreted. The protein resides in the extracellular space. It is found in the extracellular matrix. Its function is as follows. Metalloprotease. Was previously shown to degrade COMP. However, a later study found no activity against COMP. The chain is A disintegrin and metalloproteinase with thrombospondin motifs 7 (Adamts7) from Mus musculus (Mouse).